Here is a 207-residue protein sequence, read N- to C-terminus: Alpha/beta-tubulin-N-acetyltransferase 9 (207 aa).

The region spanning 35–180 (EELQRLTASE…QEVTLRLTVS (146 aa)) is the N-acetyltransferase domain.

It belongs to the acetyltransferase family. GNAT subfamily.

The catalysed reaction is N-terminal L-methionyl-[tubulin] + acetyl-CoA = N-terminal N(alpha)-acetyl-L-methionyl-[tubulin] + CoA + H(+). In terms of biological role, N-acetyltransferase that mediates the acetylation of the N-terminal residues of alpha- and beta-tubulin. This is Alpha/beta-tubulin-N-acetyltransferase 9 (NAT9) from Homo sapiens (Human).